A 1248-amino-acid polypeptide reads, in one-letter code: Ankyrin repeat and sterile alpha motif domain-containing protein 1B (1248 aa).

ANK repeat units follow at residues glycine 2 to leucine 31, serine 58 to valine 87, lysine 91 to arginine 120, glutamate 127 to isoleucine 156, lysine 160 to serine 189, arginine 193 to cysteine 222, and glutamate 225 to isoleucine 254. A disordered region spans residues glutamate 296–glutamate 322. The segment covering glutamate 305–glutamate 322 has biased composition (polar residues). Phosphoserine occurs at positions 309, 310, 314, 353, and 364. 3 disordered regions span residues glutamate 367–glycine 400, alanine 474–alanine 514, and serine 558–phenylalanine 623. The span at asparagine 371–leucine 384 shows a compositional bias: polar residues. Residues glutamate 388–asparagine 397 show a composition bias toward acidic residues. Threonine 503 is subject to Phosphothreonine. 2 positions are modified to phosphoserine: serine 507 and serine 510. The segment covering serine 558–threonine 575 has biased composition (low complexity). Residues valine 577 to aspartate 601 show a composition bias toward basic and acidic residues. At serine 738 the chain carries Phosphoserine. The tract at residues glutamate 749–threonine 777 is disordered. A compositionally biased stretch (polar residues) spans arginine 753–glutamate 763. Threonine 773 is subject to Phosphothreonine. The residue at position 775 (serine 775) is a Phosphoserine. SAM domains are found at residues cysteine 810–methionine 876 and tyrosine 884–aspartate 949. Position 901 is a phosphotyrosine (tyrosine 901). Positions histidine 935 to arginine 938 match the Nuclear localization signal motif. Residues glycine 944–aspartate 989 form a disordered region. The span at threonine 969–threonine 984 shows a compositional bias: low complexity. Serine 974 is modified (phosphoserine). The residue at position 1007 (tyrosine 1007) is a Phosphotyrosine. The 158-residue stretch at isoleucine 1056–isoleucine 1213 folds into the PID domain. A disordered region spans residues histidine 1197–phenylalanine 1248. Basic and acidic residues predominate over residues proline 1236–phenylalanine 1248.

In terms of assembly, isoform 3 interacts with DLG4. Interacts with EPHA8. Isoform 2 interacts with COIL. Isoform 4 interacts with APP and EPHA8. Isoform 6 interacts with EPHA8. In terms of processing, isoform 3 nuclear translocation requires an NMDAR-dependent proteolytic cleavage. In terms of tissue distribution, highly expressed in marrow from patients with pre-B ALL associated with the t(1;19) translocation. Strongly expressed in brain and testis. Expressed in fetal brain. Isoform 4 is highly expressed in brain (at protein level). Isoform 6 is expressed in brain and several cancer cell lines.

It is found in the cytoplasm. It localises to the nucleus. Its subcellular location is the postsynaptic density. The protein localises to the cell projection. The protein resides in the dendritic spine. It is found in the cajal body. In terms of biological role, isoform 2 may participate in the regulation of nucleoplasmic coilin protein interactions in neuronal and transformed cells. Functionally, isoform 3 can regulate global protein synthesis by altering nucleolar numbers. Its function is as follows. Isoform 4 may play a role as a modulator of APP processing. Overexpression can down-regulate APP processing. This chain is Ankyrin repeat and sterile alpha motif domain-containing protein 1B (ANKS1B), found in Homo sapiens (Human).